A 259-amino-acid polypeptide reads, in one-letter code: Flap endonuclease Xni (259 aa).

Aspartate 109 contacts Mg(2+). One can recognise a 5'-3' exonuclease domain in the interval 165–255 (VKPQQLSDYW…FNLQDLRFTA (91 aa)). K(+) is bound by residues leucine 176, isoleucine 187, and isoleucine 190. The segment at 189 to 194 (GIGPKA) is interaction with DNA.

It belongs to the Xni family. Mg(2+) is required as a cofactor. The cofactor is K(+).

Has flap endonuclease activity. During DNA replication, flap endonucleases cleave the 5'-overhanging flap structure that is generated by displacement synthesis when DNA polymerase encounters the 5'-end of a downstream Okazaki fragment. The protein is Flap endonuclease Xni of Vibrio vulnificus (strain YJ016).